A 428-amino-acid polypeptide reads, in one-letter code: MFVDQVKVYVKGGDGGNGMVAFRREKYVPKGGPAGGDGGKGGDVVFEVDEGLRTLMDFRYKKHFKAIRGEHGMSKNQHGRNADDMVIKVPPGTVVTDDDTKQVIADLTEHGQRAVIARGGRGGRGNSRFATPANPAPQLSENGEPGKERYIVLELKVLADVGLVGFPSVGKSTLLSVVSSAKPKIADYHFTTLVPNLGMVETDDGRSFVMADLPGLIEGAHQGVGLGHQFLRHIERTRVIVHVIDMSGLEGRDPYDDYLTINQELSEYNLRLTERPQIIVANKMDMPEAAENLEAFKEKLTDDYPVFPISAVTREGLRELLFEVANQLENTPEFPLYDEEELTQNRVMYTMENEEVPFNITRDPDGVFVLSGDSLERLFKMTDFSRDESVKRFARQMRGMGVDEALRERGAKDGDIIRLLEFEFEFID.

The 158-residue stretch at 1–158 (MFVDQVKVYV…RYIVLELKVL (158 aa)) folds into the Obg domain. The tract at residues 117 to 143 (ARGGRGGRGNSRFATPANPAPQLSENG) is disordered. One can recognise an OBG-type G domain in the interval 159–329 (ADVGLVGFPS…LLFEVANQLE (171 aa)). Residues 165-172 (GFPSVGKS), 190-194 (FTTLV), 212-215 (DLPG), 282-285 (NKMD), and 310-312 (SAV) contribute to the GTP site. Residues Ser-172 and Thr-192 each coordinate Mg(2+). Positions 350 to 428 (TMENEEVPFN…LLEFEFEFID (79 aa)) constitute an OCT domain.

It belongs to the TRAFAC class OBG-HflX-like GTPase superfamily. OBG GTPase family. As to quaternary structure, monomer. Interacts with TasA (AC P54507) in pull-down experiments. Mg(2+) is required as a cofactor.

The protein resides in the cytoplasm. With respect to regulation, inhibited by GDP; less than 20 uM ppGpp stimulates the GTPase, while higher concentrations inhibit. Necessary for the transition from vegetative growth to stage 0 or stage II of sporulation, but sporulation subsequent to these stages is unaffected at 45 degrees Celsius. This ts effect is probably due solely to the E-79 mutation. Required for expression of early sporulation genes, further suggesting a role in the induction of sporulation. Depletion effects on sporulation can be partially suppressed by missense mutations in spo0A. Strains depleted for obg stop growing after about 3 hours and do not induce the sigma-B factor following ethanol stress. It cofractionates with the ribosome and upstream stress response regulators RsbR, RsbS and RsbT in size fractionation columns, suggesting the ribosome might serve as a possible mediator of the activity of obg and the stress induction of sigma-B. In glycerol gradients partially associates with ribosomes; this is stabilized by a nonhydrolyzable GTP-analog and to a lesser extent GTP and GDP. Its function is as follows. An essential GTPase which binds GTP, GDP and possibly (p)ppGpp with moderate affinity, with high nucleotide exchange rates and a fairly low GTP hydrolysis rate. Plays a role in control of the cell cycle, stress response, ribosome biogenesis and in those bacteria that undergo differentiation, in morphogenesis control. This chain is GTPase Obg, found in Bacillus subtilis (strain 168).